A 345-amino-acid polypeptide reads, in one-letter code: Glycerol-3-phosphate dehydrogenase [NAD(P)+] (345 aa).

Residues Ser11, Trp12, His32, Arg33, and Lys106 each contribute to the NADPH site. Lys106, Gly137, and Ser139 together coordinate sn-glycerol 3-phosphate. Ala141 contributes to the NADPH binding site. 5 residues coordinate sn-glycerol 3-phosphate: Lys192, Asp245, Ser255, Arg256, and Asn257. The Proton acceptor role is filled by Lys192. Arg256 is an NADPH binding site. NADPH contacts are provided by Val280 and Glu282.

The protein belongs to the NAD-dependent glycerol-3-phosphate dehydrogenase family.

It is found in the cytoplasm. It catalyses the reaction sn-glycerol 3-phosphate + NAD(+) = dihydroxyacetone phosphate + NADH + H(+). The enzyme catalyses sn-glycerol 3-phosphate + NADP(+) = dihydroxyacetone phosphate + NADPH + H(+). It participates in membrane lipid metabolism; glycerophospholipid metabolism. Functionally, catalyzes the reduction of the glycolytic intermediate dihydroxyacetone phosphate (DHAP) to sn-glycerol 3-phosphate (G3P), the key precursor for phospholipid synthesis. The polypeptide is Glycerol-3-phosphate dehydrogenase [NAD(P)+] (Bacillus velezensis (strain DSM 23117 / BGSC 10A6 / LMG 26770 / FZB42) (Bacillus amyloliquefaciens subsp. plantarum)).